Here is a 508-residue protein sequence, read N- to C-terminus: Histidine ammonia-lyase (508 aa).

A cross-link (5-imidazolinone (Ala-Gly)) is located at residues 143-145 (ASG). Position 144 is a 2,3-didehydroalanine (Ser) (Ser144).

The protein belongs to the PAL/histidase family. In terms of processing, contains an active site 4-methylidene-imidazol-5-one (MIO), which is formed autocatalytically by cyclization and dehydration of residues Ala-Ser-Gly.

It localises to the cytoplasm. It carries out the reaction L-histidine = trans-urocanate + NH4(+). The protein operates within amino-acid degradation; L-histidine degradation into L-glutamate; N-formimidoyl-L-glutamate from L-histidine: step 1/3. The chain is Histidine ammonia-lyase from Klebsiella pneumoniae subsp. pneumoniae (strain ATCC 700721 / MGH 78578).